We begin with the raw amino-acid sequence, 447 residues long: Hydroxymethylglutaryl-CoA synthase (447 aa).

The Proton donor/acceptor role is filled by glutamate 86. Cysteine 118 functions as the Acyl-thioester intermediate in the catalytic mechanism. 8 residues coordinate (3S)-3-hydroxy-3-methylglutaryl-CoA: cysteine 118, asparagine 156, threonine 160, serine 210, histidine 250, lysine 259, asparagine 327, and serine 361. The Proton donor/acceptor role is filled by histidine 250. The residue at position 398 (threonine 398) is a Phosphothreonine.

It belongs to the thiolase-like superfamily. HMG-CoA synthase family.

It carries out the reaction acetoacetyl-CoA + acetyl-CoA + H2O = (3S)-3-hydroxy-3-methylglutaryl-CoA + CoA + H(+). It functions in the pathway metabolic intermediate biosynthesis; (R)-mevalonate biosynthesis; (R)-mevalonate from acetyl-CoA: step 2/3. Functionally, hydroxymethylglutaryl-CoA synthase; part of the first module of ergosterol biosynthesis pathway that includes the early steps of the pathway, conserved across all eukaryotes, and which results in the formation of mevalonate from acetyl-coenzyme A (acetyl-CoA). Hcs1 condenses acetyl-CoA with acetoacetyl-CoA to form hydroxymethylglutaryl-CoA (HMG-CoA). The first module starts with the action of the cytosolic acetyl-CoA acetyltransferase eg10 that catalyzes the formation of acetoacetyl-CoA. The hydroxymethylglutaryl-CoA synthases erg13 then condenses acetyl-CoA with acetoacetyl-CoA to form HMG-CoA. The rate-limiting step of the early module is the reduction to mevalonate by the 3-hydroxy-3-methylglutaryl-coenzyme A (HMG-CoA) reductases hcs1. This chain is Hydroxymethylglutaryl-CoA synthase, found in Schizosaccharomyces pombe (strain 972 / ATCC 24843) (Fission yeast).